We begin with the raw amino-acid sequence, 155 residues long: Ribonuclease 8 (155 aa).

A signal peptide spans 1 to 28; it reads MAPARAGCCPLLLLLLLGLWVAEIPVSA. 3 cysteine pairs are disulfide-bonded: Cys-65–Cys-119, Cys-83–Cys-134, and Cys-90–Cys-97. Residues 66 to 70 and Lys-91 each bind substrate; that span reads KDLNT. His-150 (proton donor) is an active-site residue.

This sequence belongs to the pancreatic ribonuclease family.

Its subcellular location is the secreted. Its function is as follows. Has a low ribonuclease activity. The polypeptide is Ribonuclease 8 (RNASE8) (Saguinus oedipus (Cotton-top tamarin)).